The following is a 232-amino-acid chain: tRNA (guanine-N(7)-)-methyltransferase (232 aa).

Positions 38, 63, 90, and 113 each coordinate S-adenosyl-L-methionine. The active site involves D113. Substrate-binding residues include K117 and D149.

Belongs to the class I-like SAM-binding methyltransferase superfamily. TrmB family.

The enzyme catalyses guanosine(46) in tRNA + S-adenosyl-L-methionine = N(7)-methylguanosine(46) in tRNA + S-adenosyl-L-homocysteine. It participates in tRNA modification; N(7)-methylguanine-tRNA biosynthesis. Catalyzes the formation of N(7)-methylguanine at position 46 (m7G46) in tRNA. This Syntrophotalea carbinolica (strain DSM 2380 / NBRC 103641 / GraBd1) (Pelobacter carbinolicus) protein is tRNA (guanine-N(7)-)-methyltransferase.